The chain runs to 465 residues: Deoxyguanosinetriphosphate triphosphohydrolase-like protein (465 aa).

The disordered stretch occupies residues 1–22 (MKWDKLLNDKRRRESGVTRSKN). The 190-residue stretch at 63 to 252 (RLTHSMEVST…LEVADDIAYL (190 aa)) folds into the HD domain.

The protein belongs to the dGTPase family. Type 3 subfamily.

This Listeria monocytogenes serovar 1/2a (strain ATCC BAA-679 / EGD-e) protein is Deoxyguanosinetriphosphate triphosphohydrolase-like protein.